Here is a 150-residue protein sequence, read N- to C-terminus: Protein SLM6 (150 aa).

Residues 1–76 (MCSRFSSTSL…SLLRSGVFPS (76 aa)) lie on the Extracellular side of the membrane. A helical transmembrane segment spans residues 77–97 (WLFCMFSSILALAISNSFFFF). Over 98-104 (SSNACFS) the chain is Cytoplasmic. Residues 105 to 125 (LLFNSFLVTGFSFSADLLVLA) form a helical membrane-spanning segment. At 126–150 (AAADTLESNVSNDIGGNCATRLFKL) the chain is on the extracellular side.

It is found in the membrane. The polypeptide is Protein SLM6 (Saccharomyces cerevisiae (strain ATCC 204508 / S288c) (Baker's yeast)).